The chain runs to 86 residues: Anti-adapter protein IraP (86 aa).

The stretch at 1 to 36 (MKNLIAELLFKLAQKEEESKELCAQVEALEIIVTAM) forms a coiled coil.

This sequence belongs to the IraP family. In terms of assembly, interacts with RssB.

Its subcellular location is the cytoplasm. Its function is as follows. Inhibits RpoS proteolysis by regulating RssB activity, thereby increasing the stability of the sigma stress factor RpoS especially during phosphate starvation, but also in stationary phase and during nitrogen starvation. Its effect on RpoS stability is due to its interaction with RssB, which probably blocks the interaction of RssB with RpoS, and the consequent delivery of the RssB-RpoS complex to the ClpXP protein degradation pathway. This chain is Anti-adapter protein IraP, found in Escherichia coli (strain SE11).